Reading from the N-terminus, the 401-residue chain is Cysteine desulfurase CsdA (401 aa).

An N6-(pyridoxal phosphate)lysine modification is found at lysine 222. Cysteine 358 (cysteine persulfide intermediate) is an active-site residue.

This sequence belongs to the class-V pyridoxal-phosphate-dependent aminotransferase family. Csd subfamily. Homodimer. Forms a heterodimer with CsdE. The cofactor is pyridoxal 5'-phosphate.

The enzyme catalyses (sulfur carrier)-H + L-cysteine = (sulfur carrier)-SH + L-alanine. It catalyses the reaction L-selenocysteine + AH2 = hydrogenselenide + L-alanine + A + H(+). The catalysed reaction is 3-sulfino-L-alanine + H2O = sulfite + L-alanine + H(+). With respect to regulation, cysteine desulfurase activity is increased 2-fold in the presence of CsdE. Its function is as follows. Catalyzes the removal of elemental sulfur and selenium atoms from L-cysteine, L-cystine, L-selenocysteine, and L-selenocystine to produce L-alanine, and transiently retains the released sulfur atom on a cysteine residue, in the form of a persulfide. Can also desulfinate L-cysteine sulfinate (3-sulfino-L-alanine), which is the best substrate of the enzyme. Functions as a selenium delivery protein in the pathway for the biosynthesis of selenophosphate. Seems to participate in Fe/S biogenesis by recruiting the SufBCD-SufE proteins. Transfers sulfur to CsdE that increases the cysteine desulfurase activity of CsdA. Can also transfer sulfur directly to TcdA/CsdL in vitro. Appears to support the function of TcdA in the generation of cyclic threonylcarbamoyladenosine at position 37 (ct(6)A37) in tRNAs that read codons beginning with adenine. The sequence is that of Cysteine desulfurase CsdA (csdA) from Escherichia coli (strain K12).